The primary structure comprises 188 residues: uncharacterized protein (188 aa).

Over residues Met1–Glu15 the composition is skewed to basic and acidic residues. The segment at Met1–Val21 is disordered.

This is an uncharacterized protein from Saccharolobus islandicus (Sulfolobus islandicus).